The sequence spans 239 residues: LexA repressor (239 aa).

Residues phenylalanine 26–threonine 46 constitute a DNA-binding region (H-T-H motif). Residues serine 159 and lysine 197 each act as for autocatalytic cleavage activity in the active site.

Belongs to the peptidase S24 family. As to quaternary structure, homodimer.

The enzyme catalyses Hydrolysis of Ala-|-Gly bond in repressor LexA.. Represses a number of genes involved in the response to DNA damage (SOS response), including recA and lexA. In the presence of single-stranded DNA, RecA interacts with LexA causing an autocatalytic cleavage which disrupts the DNA-binding part of LexA, leading to derepression of the SOS regulon and eventually DNA repair. This chain is LexA repressor, found in Rhizobium etli (strain CIAT 652).